The sequence spans 409 residues: Gamma-glutamyl phosphate reductase (409 aa).

The protein belongs to the gamma-glutamyl phosphate reductase family.

It is found in the cytoplasm. It catalyses the reaction L-glutamate 5-semialdehyde + phosphate + NADP(+) = L-glutamyl 5-phosphate + NADPH + H(+). It functions in the pathway amino-acid biosynthesis; L-proline biosynthesis; L-glutamate 5-semialdehyde from L-glutamate: step 2/2. Catalyzes the NADPH-dependent reduction of L-glutamate 5-phosphate into L-glutamate 5-semialdehyde and phosphate. The product spontaneously undergoes cyclization to form 1-pyrroline-5-carboxylate. The chain is Gamma-glutamyl phosphate reductase from Mycobacterium leprae (strain TN).